We begin with the raw amino-acid sequence, 321 residues long: Auxin-responsive protein IAA8 (321 aa).

The short motif at 54–58 (LRLGL) is the EAR-like (transcriptional repression) element. Residues 199-301 (VLFVKVSMDG…TCQKLKIMKG (103 aa)) form the PB1 domain.

The protein belongs to the Aux/IAA family. In terms of assembly, homodimers and heterodimers. Interacts with TPL. Highly expressed in the whole plant.

The protein localises to the nucleus. In terms of biological role, aux/IAA proteins are short-lived transcriptional factors that function as repressors of early auxin response genes at low auxin concentrations. Repression is thought to result from the interaction with auxin response factors (ARFs), proteins that bind to the auxin-responsive promoter element (AuxRE). Formation of heterodimers with ARF proteins may alter their ability to modulate early auxin response genes expression. The polypeptide is Auxin-responsive protein IAA8 (IAA8) (Arabidopsis thaliana (Mouse-ear cress)).